Consider the following 228-residue polypeptide: Cytochrome c oxidase subunit 2 (228 aa).

Over 1–26 the chain is Mitochondrial intermembrane; the sequence is MATWANLGLQNSSSPLMEQLNFFHDH. A helical membrane pass occupies residues 27–48; that stretch reads TLLILIMITVMIAYIMFMLFFN. At 49–62 the chain is on the mitochondrial matrix side; sequence KFTNRYLLHGQTIE. Residues 63-82 form a helical membrane-spanning segment; that stretch reads IIWTILPAIILMFIAFPSLR. At 83–228 the chain is on the mitochondrial intermembrane side; it reads LLYLMDEINS…FIKWISSQMN (146 aa). Positions 161, 196, 198, 200, 204, and 207 each coordinate Cu cation. Glu-198 provides a ligand contact to Mg(2+).

It belongs to the cytochrome c oxidase subunit 2 family. In terms of assembly, component of the cytochrome c oxidase (complex IV, CIV), a multisubunit enzyme composed of a catalytic core of 3 subunits and several supernumerary subunits. The complex exists as a monomer or a dimer and forms supercomplexes (SCs) in the inner mitochondrial membrane with ubiquinol-cytochrome c oxidoreductase (cytochrome b-c1 complex, complex III, CIII). Cu cation serves as cofactor.

It is found in the mitochondrion inner membrane. The catalysed reaction is 4 Fe(II)-[cytochrome c] + O2 + 8 H(+)(in) = 4 Fe(III)-[cytochrome c] + 2 H2O + 4 H(+)(out). Its function is as follows. Component of the cytochrome c oxidase, the last enzyme in the mitochondrial electron transport chain which drives oxidative phosphorylation. The respiratory chain contains 3 multisubunit complexes succinate dehydrogenase (complex II, CII), ubiquinol-cytochrome c oxidoreductase (cytochrome b-c1 complex, complex III, CIII) and cytochrome c oxidase (complex IV, CIV), that cooperate to transfer electrons derived from NADH and succinate to molecular oxygen, creating an electrochemical gradient over the inner membrane that drives transmembrane transport and the ATP synthase. Cytochrome c oxidase is the component of the respiratory chain that catalyzes the reduction of oxygen to water. Electrons originating from reduced cytochrome c in the intermembrane space (IMS) are transferred via the dinuclear copper A center (CU(A)) of subunit 2 and heme A of subunit 1 to the active site in subunit 1, a binuclear center (BNC) formed by heme A3 and copper B (CU(B)). The BNC reduces molecular oxygen to 2 water molecules using 4 electrons from cytochrome c in the IMS and 4 protons from the mitochondrial matrix. The polypeptide is Cytochrome c oxidase subunit 2 (COII) (Aedes aegypti (Yellowfever mosquito)).